Reading from the N-terminus, the 472-residue chain is Riboflavin transporter RibJ (472 aa).

Residues 1-11 lie on the Cytoplasmic side of the membrane; sequence MLPCFTRKPVD. The chain crosses the membrane as a helical span at residues 12–32; it reads HPLGFLVALSGLLMQLMSYGI. The Extracellular segment spans residues 33-58; it reads DNSYSIFSDDMHKDPSLGYPSVTTIS. Residues 59-79 traverse the membrane as a helical segment; sequence LGNSVSLGLSPAFGVLCGFLV. Residues 80 to 85 are Cytoplasmic-facing; the sequence is DRVPPR. Residues 86 to 106 traverse the membrane as a helical segment; sequence LMMAVSTLMLFAGLWLSSTFA. Residues 107–108 lie on the Extracellular side of the membrane; it reads HN. N-linked (GlcNAc...) asparagine glycosylation is present at Asn108. The helical transmembrane segment at 109-129 threads the bilayer; that stretch reads VTAVTFSYCLLASISSACMLS. Residues 130-144 are Cytoplasmic-facing; the sequence is PGAAATSSWFNRYQG. Residues 145–165 form a helical membrane-spanning segment; sequence LAMGINFSGGGVGSAIIPSLA. Residues 166 to 179 are Extracellular-facing; sequence GKWVVAYGWRKTFR. A helical transmembrane segment spans residues 180–196; the sequence is LMSAFCAIGVVATLLSA. Topologically, residues 197–271 are cytoplasmic; it reads RRAPPKKEEA…TMFSRAFLGN (75 aa). The segment at 200–248 is disordered; that stretch reads PPKKEEAGPSEYDEGQERQEQGEEEQAHTDEENRNNNNSNGETTPARRG. A compositionally biased stretch (basic and acidic residues) spans 214–233; the sequence is GQERQEQGEEEQAHTDEENR. The chain crosses the membrane as a helical span at residues 272–292; the sequence is FFCWLIFSWAFYSLIYVAVPY. Residues 293–315 lie on the Extracellular side of the membrane; that stretch reads VSSMGKAGTVYADISPIPTDIAS. A helical membrane pass occupies residues 316–336; that stretch reads TLFTFYGVFQIVGSILVGWLA. At 337 to 341 the chain is on the cytoplasmic side; sequence TGTTN. The helical transmembrane segment at 342-362 threads the bilayer; it reads EFAYVLCATIGGIFCAFLGFC. Residues 363–365 lie on the Extracellular side of the membrane; it reads RSY. A helical membrane pass occupies residues 366 to 386; sequence VAFALLLCVIGFCMAGMFAVM. Over 387-399 the chain is Cytoplasmic; sequence PALIAERLYGPNL. The chain crosses the membrane as a helical span at residues 400 to 420; the sequence is GFYMGAVFLAGVVGGFSAPPI. Topologically, residues 421–434 are extracellular; that stretch reads QAELQQRHYGNYTY. An N-linked (GlcNAc...) asparagine glycan is attached at Asn431. The helical transmembrane segment at 435-455 threads the bilayer; the sequence is VCVFMSACMTLAAAVCYITMW. Topologically, residues 456–472 are cytoplasmic; sequence RDKRVRIVSAAAEAKLA.

Belongs to the major facilitator superfamily. RibJ family.

The protein localises to the cell membrane. Functionally, transporter involved in riboflavin (vitamin B2) uptake. Also transports FMN and FAD. The chain is Riboflavin transporter RibJ from Trypanosoma cruzi (strain CL Brener).